The primary structure comprises 781 residues: Catenin beta-1 (781 aa).

Alanine 2 bears the N-acetylalanine mark. The tract at residues 2-23 (ATQADLMELDMAMEPDRKAAVS) is interaction with VCL. Position 23 is a phosphoserine; by GSK3-beta; alternate (serine 23). O-linked (GlcNAc) serine; alternate glycosylation is present at serine 23. Serine 29 is subject to Phosphoserine; by GSK3-beta. Residues serine 33 and serine 37 each carry the phosphoserine; by GSK3-beta and HIPK2 modification. Residues 34–57 (GIHSGATTTAPSLSGKGNPEEEDV) are disordered. Threonine 41 carries the post-translational modification Phosphothreonine; by GSK3-beta. A Phosphoserine modification is found at serine 45. Position 49 is an N6-acetyllysine (lysine 49). Residue tyrosine 64 is modified to Phosphotyrosine; by PTK6. Tyrosine 142 is modified (phosphotyrosine; by FYN and PTK6). 12 ARM repeats span residues 151–191 (RAIP…IMRS), 193–234 (QMVS…IFKS), 235–276 (GGIP…VRLA), 277–318 (GGLQ…ILAS), 319–360 (GGPQ…IVEA), 361–389 (GGMQ…RNLS), 400–441 (GLLG…VCQV), 442–484 (GGIE…AQNA), 489–530 (YGLP…LREQ), 531–571 (GAIP…EIVE), 594–636 (NTIP…AEGA), and 637–666 (TAPL…SEDK). Residues 156–178 (LTKLLNDEDQVVVNKAAVMVHQL) form an interaction with BCL9 region. Phosphoserine is present on serine 191. At serine 246 the chain carries Phosphoserine; by CDK5. Tyrosine 331 and tyrosine 333 each carry phosphotyrosine. At serine 552 the chain carries Phosphoserine; by AMPK. Phosphothreonine is present on threonine 556. S-nitrosocysteine is present on cysteine 619. Serine 675 bears the Phosphoserine mark. Residues 720–781 (HSGGYGQDAL…NQLAWFDTDL (62 aa)) form a disordered region. The span at 734-745 (MMEHEMGGHHPG) shows a compositional bias: basic and acidic residues. The interaction with SCRIB stretch occupies residues 772-781 (NQLAWFDTDL).

It belongs to the beta-catenin family. As to quaternary structure, two separate complex-associated pools are found in the cytoplasm. The majority is present as component of an E-cadherin/ catenin adhesion complex composed of at least E-cadherin/CDH1 and beta-catenin/CTNNB1, and possibly alpha-catenin/CTNNA1; the complex is located to adherens junctions. The stable association of CTNNA1 is controversial as CTNNA1 was shown not to bind to F-actin when assembled in the complex. Alternatively, the CTNNA1-containing complex may be linked to F-actin by other proteins such as LIMA1. Binds NHERF1. Interacts with PTPRU (via the cytoplasmic juxtamembrane domain) and with EMD. Interacts with SESTD1 and TRPC4. Interacts with CAV1. Interacts with PTPRJ. Interacts with PKT7. Interacts with FAT1 (via the cytoplasmic domain). Interacts with CDK2, NDRG2 and NANOS1. Interacts with NEK2 and CDK5. Interacts with CARM1, CXADR, PCDH11Y and PTK6. Interacts with RAPGEF2. Interacts with SOX7; this interaction may lead to proteasomal degradation of active CTNNB1 and thus inhibition of Wnt/beta-catenin-stimulated transcription. Identified in a complex with HINT1 and MITF. Interacts with FHIT. Interacts with FERMT2. Identified in a complex with TCF4 and FERMT2. Another cytoplasmic pool is part of a large complex containing AXIN1, AXIN2, APC, CSNK1A1 and GSK3B that promotes phosphorylation on N-terminal Ser and Thr residues and ubiquitination of CTNNB1 via BTRC and its subsequent degradation by the proteasome. Wnt-dependent activation of DVL antagonizes the action of GSK3B. When GSK3B activity is inhibited the complex dissociates, CTNNB1 is dephosphorylated and is no longer targeted for destruction. The stabilized protein translocates to the nucleus, where it binds TCF/LEF-1 family members, BCL9, BCL9L and possibly also RUVBL1 and CHD8. Interacts with TAX1BP3 (via the PDZ domain); this interaction inhibits the transcriptional activity of CTNNB1. Interacts with AJAP1, BAIAP1 and CTNNA3. Interacts with TRPV4; the TRPV4 and CTNNB1 complex can interact with CDH1. Interacts with VCL. The CTNNB1 and TCF4 complex interacts with PML. Interacts with XIRP1. Binds CTNNBIP and EP300. CTNNB1 forms a ternary complex with LEF1 and EP300 that is disrupted by CTNNBIP1 binding. Interacts directly with AXIN1; the interaction is regulated by CDK2 phosphorylation of AXIN1. Interacts with GLIS2. Interacts with SCRIB. Interacts with TNIK and TCF7L2. Interacts with SLC30A9. Interacts with RORA. May interact with P-cadherin/CDH3. Interacts with RNF220. Interacts with CTNND2. Interacts (via the C-terminal region) with CBY1. The complex composed, at least, of APC, CTNNB1 and GSK3B interacts with JPT1; the interaction requires the inactive form of GSK3B (phosphorylated at 'Ser-9'). Interacts with DLG5. Interacts with FAM53B; promoting translocation to the nucleus. Interacts with TMEM170B. Interacts with AHI1. Interacts with GID8. Component of an cadherin:catenin adhesion complex composed of at least of CDH26, beta-catenin/CTNNB1, alpha-catenin/CTNNA1 and p120 catenin/CTNND1. Forms a complex comprising APPL1, RUVBL2, APPL2, HDAC1 and HDAC2. Interacts with IRF2BPL; mediates the ubiquitination and degradation of CTNNB1. Interacts with AMFR. Interacts with LMBR1L. Interacts with SOX30; prevents interaction of CTNNB1 with TCF7L2/TCF4 and leads to inhibition of Wnt signaling. Interacts with SOX9; inhibiting CTNNB1 activity by competing with the binding sites of TCF/LEF within CTNNB1, thereby inhibiting the Wnt signaling. Interacts with SPN/CD43 cytoplasmic tail. Interacts (when phosphorylated at Tyr-333) with isoform M2 of PKM (PKM2); promoting transcription activation. Interacts with PKP2 (via HEAD domain). Interacts with CDH1. Interacts (when unphosphorylated) with FLYWCH1, perhaps preventing interaction of CTNNB1 with TCF4, and thereby regulating transcription activation; phosphorylation of CTNNB1 may inhibit the interaction. Interacts (via the central armadillo domains) with probable transcriptional regulator ADNP (via N-terminal region); interaction is direct and stabilizes CTNNB1 by modulating its phosphorylation by glycogen synthase kinase-3 beta GSK3B. Interacts with NR5A2. Interacts with DSG2; the interaction promotes localization of CTNNB1 at cell junctions thus reducing its nuclear localization and subsequent transcription of CTNNB1/TCF-target genes. Post-translationally, phosphorylation at Ser-552 by AMPK promotes stabilization of the protein, enhancing TCF/LEF-mediated transcription. Phosphorylation by GSK3B requires prior phosphorylation of Ser-45 by another kinase. Phosphorylation proceeds then from Thr-41 to Ser-37 and Ser-33. Phosphorylated by NEK2. EGF stimulates tyrosine phosphorylation. Phosphorylated on Ser-33 and Ser-37 by HIPK2 and GSK3B, this phosphorylation triggers proteasomal degradation. Phosphorylation on Ser-191 and Ser-246 by CDK5. Phosphorylation by CDK2 regulates insulin internalization. Phosphorylation by PTK6 at Tyr-64, Tyr-142, Tyr-331 and/or Tyr-333 with the predominant site at Tyr-64 is not essential for inhibition of transcriptional activity. Phosphorylation by SRC at Tyr-333 promotes interaction with isoform M2 of PKM (PKM2); promoting transcription activation. Ubiquitinated by the SCF(BTRC) E3 ligase complex when phosphorylated by GSK3B, leading to its degradation. Ubiquitinated by a E3 ubiquitin ligase complex containing UBE2D1, SIAH1, CACYBP/SIP, SKP1, APC and TBL1X, leading to its subsequent proteasomal degradation. Ubiquitinated and degraded following interaction with SOX9. Ubiquitinated via 'Lys-11'- and 'Lys-29'-linked ubiquitin chains by UBR5, leading to its stabilization. In terms of processing, S-nitrosylation at Cys-619 within adherens junctions promotes VEGF-induced, NO-dependent endothelial cell permeability by disrupting interaction with E-cadherin, thus mediating disassembly adherens junctions. Post-translationally, O-glycosylation at Ser-23 decreases nuclear localization and transcriptional activity, and increases localization to the plasma membrane and interaction with E-cadherin CDH1. Deacetylated at Lys-49 by SIRT1. In terms of tissue distribution, expressed in cerebellar granule neurons (at protein level). Expressed in the intestinal epithelium (at protein level). Abundantly expressed in the tooth, skin, lung, kidney, eye and brain with weak expression in the liver and heart.

It is found in the cytoplasm. The protein resides in the nucleus. Its subcellular location is the cytoskeleton. The protein localises to the cell junction. It localises to the adherens junction. It is found in the cell membrane. The protein resides in the microtubule organizing center. Its subcellular location is the centrosome. The protein localises to the spindle pole. It localises to the synapse. It is found in the cilium basal body. Functionally, key downstream component of the canonical Wnt signaling pathway. In the absence of Wnt, forms a complex with AXIN1, AXIN2, APC, CSNK1A1 and GSK3B that promotes phosphorylation on N-terminal Ser and Thr residues and ubiquitination of CTNNB1 via BTRC and its subsequent degradation by the proteasome. In the presence of Wnt ligand, CTNNB1 is not ubiquitinated and accumulates in the nucleus, where it acts as a coactivator for transcription factors of the TCF/LEF family, leading to activate Wnt responsive genes. Also acts as a coactivator for other transcription factors, such as NR5A2. Promotes epithelial to mesenchymal transition/mesenchymal to epithelial transition (EMT/MET) via driving transcription of CTNNB1/TCF-target genes. Involved in the regulation of cell adhesion, as component of an E-cadherin:catenin adhesion complex. Acts as a negative regulator of centrosome cohesion. Involved in the CDK2/PTPN6/CTNNB1/CEACAM1 pathway of insulin internalization. Blocks anoikis of malignant kidney and intestinal epithelial cells and promotes their anchorage-independent growth by down-regulating DAPK2. Disrupts PML function and PML-NB formation by inhibiting RANBP2-mediated sumoylation of PML. Promotes neurogenesis by maintaining sympathetic neuroblasts within the cell cycle. Involved in chondrocyte differentiation via interaction with SOX9: SOX9-binding competes with the binding sites of TCF/LEF within CTNNB1, thereby inhibiting the Wnt signaling. Acts as a positive regulator of odontoblast differentiation during mesenchymal tooth germ formation, via promoting the transcription of differentiation factors such as LEF1, BMP2 and BMP4. Activity is repressed in a MSX1-mediated manner at the bell stage of mesenchymal tooth germ formation which prevents premature differentiation of odontoblasts. The chain is Catenin beta-1 from Mus musculus (Mouse).